The chain runs to 350 residues: NADH-quinone oxidoreductase subunit H (350 aa).

Helical transmembrane passes span phenylalanine 5–methionine 25, phenylalanine 76–isoleucine 96, isoleucine 118–glycine 138, isoleucine 162–valine 182, methionine 190–alanine 210, leucine 243–glycine 263, leucine 284–valine 304, and leucine 319–isoleucine 339.

Belongs to the complex I subunit 1 family. NDH-1 is composed of 14 different subunits. Subunits NuoA, H, J, K, L, M, N constitute the membrane sector of the complex.

It localises to the cell inner membrane. The enzyme catalyses a quinone + NADH + 5 H(+)(in) = a quinol + NAD(+) + 4 H(+)(out). Functionally, NDH-1 shuttles electrons from NADH, via FMN and iron-sulfur (Fe-S) centers, to quinones in the respiratory chain. The immediate electron acceptor for the enzyme in this species is believed to be ubiquinone. Couples the redox reaction to proton translocation (for every two electrons transferred, four hydrogen ions are translocated across the cytoplasmic membrane), and thus conserves the redox energy in a proton gradient. This subunit may bind ubiquinone. The protein is NADH-quinone oxidoreductase subunit H of Flavobacterium johnsoniae (strain ATCC 17061 / DSM 2064 / JCM 8514 / BCRC 14874 / CCUG 350202 / NBRC 14942 / NCIMB 11054 / UW101) (Cytophaga johnsonae).